The chain runs to 364 residues: MSSAPRSPTPRPRRMKKDESFLGKLGGTLARKRRAREVSDLQEEGKNAINSPMSPALVDVHPEDTQLEENEERTMIDPTSKEDPKFKELVKVLLDWINDVLVEERIIVKQLEEDLYDGQVLQKLLEKLAGCKLNVAEVTQSEIGQKQKLQTVLEAVHDLLRPRGWALRWSVDSIHGKNLVAILHLLVSLAMHFRAPIRLPEHVTVQVVVVRKREGLLHSSHISEELTTTTEMMMGRFERDAFDTLFDHAPDKLSVVKKSLITFVNKHLNKLNLEVTELETQFADGVYLVLLMGLLEDYFVPLHHFYLTPESFDQKVHNVSFAFELMLDGGLKKPKARPEDVVNLDLKSTLRVLYNLFTKYKNVE.

The interval 1–57 is disordered; that stretch reads MSSAPRSPTPRPRRMKKDESFLGKLGGTLARKRRAREVSDLQEEGKNAINSPMSPAL. Phosphoserine is present on Ser7. Basic and acidic residues predominate over residues 36–46; it reads REVSDLQEEGK. The residue at position 54 (Ser54) is a Phosphoserine. Calponin-homology (CH) domains are found at residues 87-194 and 254-361; these read KELV…MHFR and SVVK…TKYK.

Belongs to the parvin family. As to quaternary structure, interacts with DYSF. Interacts with ILK, ARHGEF6, PXN (via LD motifs), ACTN2 and actin. In terms of tissue distribution, expressed predominantly in heart and skeletal muscle.

It localises to the cell junction. The protein localises to the focal adhesion. Its subcellular location is the cell membrane. The protein resides in the cytoplasm. It is found in the cytoskeleton. It localises to the cell projection. The protein localises to the lamellipodium. Its subcellular location is the myofibril. The protein resides in the sarcomere. It is found in the z line. Its function is as follows. Adapter protein that plays a role in integrin signaling via ILK and in activation of the GTPases CDC42 and RAC1 by guanine exchange factors, such as ARHGEF6. Is involved in the reorganization of the actin cytoskeleton and formation of lamellipodia. Plays a role in cell adhesion, cell spreading, establishment or maintenance of cell polarity, and cell migration. In Homo sapiens (Human), this protein is Beta-parvin (PARVB).